Here is an 855-residue protein sequence, read N- to C-terminus: Zinc finger protein 814 (855 aa).

Residues 15–91 (VTFEDVAVNF…PMAGVSPKKA (77 aa)) form the KRAB domain. Residues 120–142 (HRCEAWGNKLYDSGNFHQHQNEH) form a C2H2-type 1; degenerate zinc finger. 22 consecutive C2H2-type zinc fingers follow at residues 242-264 (YVCCECGKSFSKYASLSNHQRVH), 269-291 (HECGECGKSFSKYVSFSNHQRVH), 296-318 (HECGECGKSFSKYVSFSNHQRVH), 324-346 (YECGECGKSFSKYASFSNHQRVH), 352-374 (YECGECGKSFSKYVSFSNHQRVH), 380-402 (YECGECGKSFSKYASFSNHQRVH), 408-430 (YECGECGKSFSQKSSLIQHQRFH), 436-458 (YGCEECGKSFSSEGHLRSHQRVH), 464-486 (FKCGECVKSFSHKRSLVHHQRVH), 492-514 (YQCGECGKSFSQKGNLVLHQRVH), 520-542 (YECGECGKSFSSKGHLRNHQQIH), 548-570 (YECGECGKSFSHKGTLILHQRVH), 576-598 (YGCGECGKSFSSIGHLRSHQRVH), 604-626 (YECGECGKSFSHKRSLVHHQRMH), 632-654 (YKCGDCGKSFNEKGHLRNHQRVH), 660-682 (FKCGECGKCFSHKGNLILHQHGH), 688-710 (YVCRECGKLFKKKSHLLVHQRIH), 716-738 (YACEACQKFFRNKYQLIAHQRVH), 744-766 (YECNDCGKSFTHSSTFCVHKRIH), 772-794 (YECSECGKSFAESSSFTKHKRVH), 800-822 (YECSECGKSFAESSSLTKHKRVH), and 828-850 (YKCEKCGKLFNKKSHLLVHQSSH). Lys335 participates in a covalent cross-link: Glycyl lysine isopeptide (Lys-Gly) (interchain with G-Cter in SUMO2). Lys391 participates in a covalent cross-link: Glycyl lysine isopeptide (Lys-Gly) (interchain with G-Cter in SUMO2).

This is Zinc finger protein 814 (ZNF814) from Homo sapiens (Human).